The primary structure comprises 1192 residues: DNA topoisomerase 2 (1192 aa).

Residues Asn64, Asn95, and 142–149 (GTNGVGLK) contribute to the ATP site. Glu438, Asp539, and Asp541 together coordinate Mg(2+). The region spanning 707–1174 (IPNFLDGMTR…PGASVWLEEI (468 aa)) is the Topo IIA-type catalytic domain. Residue Tyr800 is the O-(5'-phospho-DNA)-tyrosine intermediate of the active site.

Belongs to the type II topoisomerase family. It depends on Mg(2+) as a cofactor. Requires Mn(2+) as cofactor. Ca(2+) is required as a cofactor.

It localises to the host cytoplasm. The enzyme catalyses ATP-dependent breakage, passage and rejoining of double-stranded DNA.. Functionally, type II topoisomerase. Processively relaxes supercoiled DNA. Displays DNA-supercoiling activity only when associated with the viral histone-like protein. The protein is DNA topoisomerase 2 of African swine fever virus (isolate Pig/Kenya/KEN-50/1950) (ASFV).